A 225-amino-acid polypeptide reads, in one-letter code: Suppressor of cytokine signaling 3 (225 aa).

Positions 22–33 are kinase inhibitory region (KIR); sequence LKTFSSKSEYQL. The interval 34–45 is extended SH2 subdomain (ESS); the sequence is VVNAVRKLQESG. The 97-residue stretch at 46–142 folds into the SH2 domain; that stretch reads FYWSAVTGGE…TPSFSLPPTE (97 aa). Positions 131-160 are disordered; the sequence is PGTPSFSLPPTEPSSEVPEQPPAQALPGST. The SOCS box domain maps to 177–224; sequence VLSRPLSSNVATLQHLCRKTVNGHLDSYEKVTQLPGPIREFLDQYDAP.

As to quaternary structure, interacts with multiple activated proteins of the tyrosine kinase signaling pathway including IGF1 receptor, insulin receptor and JAK2. Binding to JAK2 is mediated through the KIR and SH2 domains to a phosphorylated tyrosine residue within the JAK2 JH1 domain. Binds specific activated tyrosine residues of the leptin, EPO, IL12, GSCF and gp130 receptors. Interaction with CSNK1E stabilizes SOCS3 protein. Component of the probable ECS(SOCS3) E3 ubiquitin-protein ligase complex which contains CUL5, RNF7/RBX2, elongin BC complex and SOCS3. Interacts with CUL5, RNF7, ELOB and ELOC. Interacts with FGFR3. Interacts with INSR. Interacts with BCL10; this interaction may interfere with BCL10-binding with PELI2. Interacts with NOD2 (via CARD domain); the interaction promotes NOD2 degradation. Post-translationally, phosphorylated on tyrosine residues after stimulation by the cytokines, IL-2, EPO or IGF1. Low expression in lung, spleen and thymus. Expressed in Th2 but not TH1 cells.

Its pathway is protein modification; protein ubiquitination. Functionally, SOCS family proteins form part of a classical negative feedback system that regulates cytokine signal transduction. SOCS3 is involved in negative regulation of cytokines that signal through the JAK/STAT pathway. Inhibits cytokine signal transduction by binding to tyrosine kinase receptors including IL6ST/gp130, LIF, erythropoietin, insulin, IL12, GCSF and leptin receptors. Binding to JAK2 inhibits its kinase activity and regulates IL6 signaling. Suppresses fetal liver erythropoiesis. Regulates onset and maintenance of allergic responses mediated by T-helper type 2 cells. Probable substrate recognition component of a SCF-like ECS (Elongin BC-CUL2/5-SOCS-box protein) E3 ubiquitin-protein ligase complex which mediates the ubiquitination and subsequent proteasomal degradation of target proteins. This Mus musculus (Mouse) protein is Suppressor of cytokine signaling 3.